The following is a 616-amino-acid chain: Chaperone protein HscA (616 aa).

This sequence belongs to the heat shock protein 70 family.

Functionally, chaperone involved in the maturation of iron-sulfur cluster-containing proteins. Has a low intrinsic ATPase activity which is markedly stimulated by HscB. Involved in the maturation of IscU. The protein is Chaperone protein HscA of Salmonella paratyphi C (strain RKS4594).